Consider the following 1102-residue polypeptide: DNA-directed RNA polymerase subunit beta (1102 aa).

Residues 1081-1102 (LPGKRTPSRPIYESLSTEGNQD) form a disordered region.

It belongs to the RNA polymerase beta chain family. In terms of assembly, in cyanobacteria the RNAP catalytic core is composed of 2 alpha, 1 beta, 1 beta', 1 gamma and 1 omega subunit. When a sigma factor is associated with the core the holoenzyme is formed, which can initiate transcription.

The enzyme catalyses RNA(n) + a ribonucleoside 5'-triphosphate = RNA(n+1) + diphosphate. Its function is as follows. DNA-dependent RNA polymerase catalyzes the transcription of DNA into RNA using the four ribonucleoside triphosphates as substrates. The sequence is that of DNA-directed RNA polymerase subunit beta from Trichodesmium erythraeum (strain IMS101).